Reading from the N-terminus, the 461-residue chain is MSVRIEHDTFGEIEVPADKYWGAQTERSKRNFPVGKERMPIEVVYGFAQLKRAAAIANFDLGKLSEAKKDAIVYACDQILSGELDEHFPLVVWQTGSGTQSNMNVNEVVSYVANMYLKDHQSDESIHPNDDVNKSQSSNDTFPTAMHVALYQEVETKLEPALKLLRNTLKEKEDKFDSIIKIGRTHLQDATPIKLGQEISGWRYMLDRCETMLSESKKHILNLAIGGTAVGTGINAHPEFGDKVAHYISENTGYPFVSSENKFHALTAHDEVVQLHGTLKALAGDLMKIANDVRWLASGPRAGLAEISIPENEPGSSIMPGKVNPTQCEMLTMVAVQVMGNDTVVGFASSQGNFELNVYKPVIMHNTLQSIYLLADGMETFNNNCAVGIEPIEENIDNYLNQSLMLVTALNPHIGYEKAAQIAKKAHKEGLTLKESAIQTGYVTEEQFEAWIKPEDMVDPH.

Residues 97 to 99 (SGT), 127 to 130 (HPND), 137 to 139 (SSN), and T185 contribute to the substrate site. The active-site Proton donor/acceptor is the H186. S316 is a catalytic residue. Substrate-binding positions include S317 and 322-324 (KVN).

This sequence belongs to the class-II fumarase/aspartase family. Fumarase subfamily. In terms of assembly, homotetramer.

It localises to the cytoplasm. It carries out the reaction (S)-malate = fumarate + H2O. It functions in the pathway carbohydrate metabolism; tricarboxylic acid cycle; (S)-malate from fumarate: step 1/1. Involved in the TCA cycle. Catalyzes the stereospecific interconversion of fumarate to L-malate. The chain is Fumarate hydratase class II from Staphylococcus aureus (strain COL).